Reading from the N-terminus, the 472-residue chain is L-fuculokinase (472 aa).

This sequence belongs to the FGGY kinase family. Requires a divalent metal cation as cofactor.

It catalyses the reaction L-fuculose + ATP = L-fuculose 1-phosphate + ADP + H(+). It participates in carbohydrate degradation; L-fucose degradation; L-lactaldehyde and glycerone phosphate from L-fucose: step 2/3. Its function is as follows. Catalyzes the phosphorylation of L-fuculose. This chain is L-fuculokinase, found in Salmonella typhi.